Consider the following 365-residue polypeptide: Endophilin-B1 (365 aa).

N-acetylmethionine is present on Met1. The tract at residues 1–30 (MNIMDFNVKKLAADAGTFLSRAVQFTEEKL) is membrane-binding amphipathic helix. A required for membrane binding region spans residues 1–37 (MNIMDFNVKKLAADAGTFLSRAVQFTEEKLGQAEKTE). Positions 27–261 (EEKLGQAEKT…LGSFPSNYHS (235 aa)) constitute a BAR domain. At Thr145 the chain carries Phosphothreonine; by CDK5. Positions 155–195 (YKTIAKERKLLQNKRLDLDAAKTRLKKAKAAETRASSEQEL) form a coiled coil. In terms of domain architecture, SH3 spans 305 to 365 (GGSRRARVLY…VPITYLELLN (61 aa)).

Belongs to the endophilin family. Homodimer, and heterodimer with SH3GLB2. Binds BAX; induction of apoptosis augments BAX binding. Binds DNM1, HTT, AMPH, BIN1 and ARFGAP1. Interacts with UVRAG; UVRAG bridges the interaction to BECN1 indicative for an association with the PI3K complex II (PI3KC3-C2). In terms of processing, phosphorylated at Thr-145 by CDK5; this phosphorylation is required for autophagy induction in starved neurons and facilitates homodimerization.

It is found in the cytoplasm. It localises to the golgi apparatus membrane. The protein resides in the mitochondrion outer membrane. The protein localises to the cytoplasmic vesicle. Its subcellular location is the autophagosome membrane. It is found in the midbody. Its function is as follows. May be required for normal outer mitochondrial membrane dynamics. Required for coatomer-mediated retrograde transport in certain cells. May recruit other proteins to membranes with high curvature. May promote membrane fusion. Involved in activation of caspase-dependent apoptosis by promoting BAX/BAK1 activation. Involved in caspase-independent apoptosis during nutrition starvation and involved in the regulation of autophagy. Activates lipid kinase activity of PIK3C3 during autophagy probably by associating with the PI3K complex II (PI3KC3-C2). Associated with PI3KC3-C2 during autophagy may regulate the trafficking of ATG9A from the Golgi complex to the peripheral cytoplasm for the formation of autophagosomes by inducing Golgi membrane tubulation and fragmentation. Involved in regulation of degradative endocytic trafficking and cytokinesis, probably in the context of PI3KC3-C2. The sequence is that of Endophilin-B1 (SH3GLB1) from Bos taurus (Bovine).